The sequence spans 355 residues: Polyferredoxin protein FwdF (355 aa).

4Fe-4S ferredoxin-type domains lie at 24 to 53 (RELCWNDELCVGCGICADICPVNAIAMGPL), 64 to 93 (PKLDIDKDVCVLCGMCASACPFDALDLKIN), 108 to 137 (RDIKVYQDKCVLCEQCEMVCPQGAIVVERE), 147 to 176 (GEININKEKCVLCGICAEYCPADAINLKYN), 187 to 216 (TDIEVDKDKCVFCKVCEFVCPHDAIEVICY), 235 to 264 (GKTVIDKDACVTCGWCAFICPAEAIEVEKP), 267 to 296 (GELIIDVNACNACGACISICPCSALEFPKP), and 304 to 333 (PRIIVNQNLCVLCGACAKACPVNAIKVKRT). 32 residues coordinate [4Fe-4S] cluster: Cys33, Cys36, Cys39, Cys43, Cys73, Cys76, Cys79, Cys83, Cys117, Cys120, Cys123, Cys127, Cys156, Cys159, Cys162, Cys166, Cys196, Cys199, Cys202, Cys206, Cys244, Cys247, Cys250, Cys254, Cys276, Cys279, Cys282, Cys286, Cys313, Cys316, Cys319, and Cys323.

Requires [4Fe-4S] cluster as cofactor.

This chain is Polyferredoxin protein FwdF (fwdF), found in Methanocaldococcus jannaschii (strain ATCC 43067 / DSM 2661 / JAL-1 / JCM 10045 / NBRC 100440) (Methanococcus jannaschii).